The sequence spans 353 residues: Uroporphyrinogen decarboxylase (353 aa).

Substrate is bound by residues 33-37, Asp82, Tyr158, Ser213, and His332; that span reads RQAGR.

The protein belongs to the uroporphyrinogen decarboxylase family. Homodimer.

It is found in the cytoplasm. The enzyme catalyses uroporphyrinogen III + 4 H(+) = coproporphyrinogen III + 4 CO2. The protein operates within porphyrin-containing compound metabolism; protoporphyrin-IX biosynthesis; coproporphyrinogen-III from 5-aminolevulinate: step 4/4. Functionally, catalyzes the decarboxylation of four acetate groups of uroporphyrinogen-III to yield coproporphyrinogen-III. The sequence is that of Uroporphyrinogen decarboxylase from Gluconobacter oxydans (strain 621H) (Gluconobacter suboxydans).